Consider the following 305-residue polypeptide: Ribonuclease BN (305 aa).

7 residues coordinate Zn(2+): histidine 64, histidine 66, aspartate 68, histidine 69, histidine 141, aspartate 212, and histidine 270. Aspartate 68 functions as the Proton acceptor in the catalytic mechanism.

The protein belongs to the RNase Z family. RNase BN subfamily. Homodimer. Zn(2+) is required as a cofactor.

In terms of biological role, zinc phosphodiesterase, which has both exoribonuclease and endoribonuclease activities. This chain is Ribonuclease BN, found in Escherichia coli O45:K1 (strain S88 / ExPEC).